A 251-amino-acid chain; its full sequence is Cell division protein ZapD (251 aa).

This sequence belongs to the ZapD family. In terms of assembly, interacts with FtsZ.

Its subcellular location is the cytoplasm. In terms of biological role, cell division factor that enhances FtsZ-ring assembly. Directly interacts with FtsZ and promotes bundling of FtsZ protofilaments, with a reduction in FtsZ GTPase activity. The chain is Cell division protein ZapD from Burkholderia thailandensis (strain ATCC 700388 / DSM 13276 / CCUG 48851 / CIP 106301 / E264).